The sequence spans 458 residues: UDP-N-acetylmuramoylalanine--D-glutamate ligase (458 aa).

124–130 serves as a coordination point for ATP; sequence GSDGKTT.

The protein belongs to the MurCDEF family.

Its subcellular location is the cytoplasm. It catalyses the reaction UDP-N-acetyl-alpha-D-muramoyl-L-alanine + D-glutamate + ATP = UDP-N-acetyl-alpha-D-muramoyl-L-alanyl-D-glutamate + ADP + phosphate + H(+). It functions in the pathway cell wall biogenesis; peptidoglycan biosynthesis. Functionally, cell wall formation. Catalyzes the addition of glutamate to the nucleotide precursor UDP-N-acetylmuramoyl-L-alanine (UMA). The polypeptide is UDP-N-acetylmuramoylalanine--D-glutamate ligase (Clostridium botulinum (strain 657 / Type Ba4)).